We begin with the raw amino-acid sequence, 127 residues long: Glycine cleavage system H protein (127 aa).

The 83-residue stretch at 22–104 (EAVIGITHFA…YTEGWMLRVK (83 aa)) folds into the Lipoyl-binding domain. Position 63 is an N6-lipoyllysine (Lys-63).

The protein belongs to the GcvH family. The glycine cleavage system is composed of four proteins: P, T, L and H. Requires (R)-lipoate as cofactor.

Functionally, the glycine cleavage system catalyzes the degradation of glycine. The H protein shuttles the methylamine group of glycine from the P protein to the T protein. This chain is Glycine cleavage system H protein, found in Nitratidesulfovibrio vulgaris (strain DP4) (Desulfovibrio vulgaris).